The following is a 99-amino-acid chain: Aspartyl/glutamyl-tRNA(Asn/Gln) amidotransferase subunit C (99 aa).

Belongs to the GatC family. Heterotrimer of A, B and C subunits.

The catalysed reaction is L-glutamyl-tRNA(Gln) + L-glutamine + ATP + H2O = L-glutaminyl-tRNA(Gln) + L-glutamate + ADP + phosphate + H(+). It carries out the reaction L-aspartyl-tRNA(Asn) + L-glutamine + ATP + H2O = L-asparaginyl-tRNA(Asn) + L-glutamate + ADP + phosphate + 2 H(+). In terms of biological role, allows the formation of correctly charged Asn-tRNA(Asn) or Gln-tRNA(Gln) through the transamidation of misacylated Asp-tRNA(Asn) or Glu-tRNA(Gln) in organisms which lack either or both of asparaginyl-tRNA or glutaminyl-tRNA synthetases. The reaction takes place in the presence of glutamine and ATP through an activated phospho-Asp-tRNA(Asn) or phospho-Glu-tRNA(Gln). The chain is Aspartyl/glutamyl-tRNA(Asn/Gln) amidotransferase subunit C from Sulfurihydrogenibium sp. (strain YO3AOP1).